Reading from the N-terminus, the 1017-residue chain is Probable DNA ligase (1017 aa).

Residues 1–363 form a unknown region; that stretch reads MPWDVKFSHG…PACATPLHAP (363 aa). Residues 326 to 352 form a disordered region; it reads GIRSSPPQVRAGDATPSSRSSGDAGVA. The segment at 364–1017 is DNA ligase; the sequence is DSFARFVAAA…GARPPPAASD (654 aa). ATP is bound at residue E667. The active-site N6-AMP-lysine intermediate is K669. Residues R674, R689, E717, R860, and K866 each contribute to the ATP site.

It in the C-terminal section; belongs to the ATP-dependent DNA ligase family. Mg(2+) serves as cofactor.

It carries out the reaction ATP + (deoxyribonucleotide)n-3'-hydroxyl + 5'-phospho-(deoxyribonucleotide)m = (deoxyribonucleotide)n+m + AMP + diphosphate.. Functionally, DNA ligase that seals nicks in double-stranded DNA during DNA replication, DNA recombination and DNA repair. The chain is Probable DNA ligase (lig) from Opitutus terrae (strain DSM 11246 / JCM 15787 / PB90-1).